The sequence spans 102 residues: 10 kDa heat shock protein, mitochondrial (102 aa).

Belongs to the GroES chaperonin family. As to quaternary structure, homohexamer.

Its subcellular location is the mitochondrion matrix. Its function is as follows. Eukaryotic CPN10 homolog which is essential for mitochondrial protein biogenesis, together with CPN60. Binds to CPN60 in the presence of Mg-ATP and suppresses the ATPase activity of the latter. This is 10 kDa heat shock protein, mitochondrial from Schistosoma japonicum (Blood fluke).